Here is a 1203-residue protein sequence, read N- to C-terminus: Exonuclease/helicase subunit RexA (1203 aa).

One can recognise a UvrD-like helicase ATP-binding domain in the interval 4 to 472 (VKLTPEQNEA…IRLKENFRSR (469 aa)). Residue 25 to 32 (ASAGSGKT) coordinates ATP. One can recognise a UvrD-like helicase C-terminal domain in the interval 503–785 (VQGNISDYPV…RVMTFHKSKG (283 aa)).

Belongs to the helicase family. AddA subfamily. Heterodimer of RexA (AddA) and RexB. Mg(2+) serves as cofactor.

It catalyses the reaction Couples ATP hydrolysis with the unwinding of duplex DNA by translocating in the 3'-5' direction.. The enzyme catalyses ATP + H2O = ADP + phosphate + H(+). Functionally, the heterodimer acts both as an ATP-dependent DNA helicase and an ATP-dependent, dual-direction single-stranded exonuclease. Recognizes the L.lactis chi site (5'-GCGCGTG-3'), which stimulates homologous recombination. The RexA (AddA) nuclease domain is required for chi fragment generation; this subunit has 3'-&gt;5' exonuclease activity and probably also performs the helicase function. The chain is Exonuclease/helicase subunit RexA from Lactococcus lactis subsp. cremoris (strain MG1363).